Consider the following 1512-residue polypeptide: Zinc finger protein 608 (1512 aa).

Disordered stretches follow at residues 1-23, 46-74, 89-237, 260-295, and 417-545; these read MSVN…YDSG, QKFE…SGAG, QASA…HLYG, VAAA…HRRI, and RFCE…FLDQ. Low complexity-rich tracts occupy residues 51 to 74 and 151 to 185; these read NNST…SGAG and SALG…GSCG. A compositionally biased stretch (basic and acidic residues) spans 201–218; it reads AKRDKDAGKSRKDKHDLL. Positions 220–230 are enriched in polar residues; that stretch reads GHQNGSGSQAP. Residues 260–270 show a composition bias toward low complexity; it reads VAAAGEVSKSA. Residues 278–304 are a coiled coil; it reads NSMLVKKEEEEEESHRRIKKLKTEKVD. Residue Lys283 forms a Glycyl lysine isopeptide (Lys-Gly) (interchain with G-Cter in SUMO2) linkage. Residues Ser421 and Ser424 each carry the phosphoserine modification. Positions 449-458 are enriched in polar residues; it reads ASFTESRGLQ. Thr481 is modified (phosphothreonine). At Ser493 the chain carries Phosphoserine. Polar residues predominate over residues 526–535; sequence NSRSTPTTPQ. The segment at 553 to 578 adopts a C2H2-type zinc-finger fold; sequence IDCPHPNCNKKYKHINGLRYHQAHAH. Disordered stretches follow at residues 622 to 665, 713 to 750, and 777 to 858; these read LKAP…KKKG, DKEK…PQLI, and QATP…KDHL. Ser627 is subject to Phosphoserine. Positions 713-729 are enriched in basic and acidic residues; it reads DKEKGKKATNCKTDKNL. Residues 781–790 show a composition bias toward pro residues; that stretch reads KSPPLKPIQP. Position 782 is a phosphoserine (Ser782). Residues 818–858 show a composition bias toward basic and acidic residues; it reads KLKDKEGKETGSPKMDAKLGKLEDSKGASKDLPGHFLKDHL. Lys880 is covalently cross-linked (Glycyl lysine isopeptide (Lys-Gly) (interchain with G-Cter in SUMO2)). Ser895 carries the post-translational modification Phosphoserine. Residues 925 to 934 show a composition bias toward polar residues; it reads NGAESSAAKT. Disordered stretches follow at residues 925–996 and 1011–1066; these read NGAE…HSPY and PGQV…HQSV. The span at 960–973 shows a compositional bias: low complexity; sequence SKASSPSDIISSKD. Residue Ser964 is modified to Phosphoserine. Polar residues predominate over residues 979 to 989; the sequence is HSSTTAQSSQL. The span at 1030–1054 shows a compositional bias: basic and acidic residues; the sequence is IKKESEEDAEKKDKAEQLDSKKVDH. Residues 1055–1066 are compositionally biased toward polar residues; sequence NSASLQPQHQSV. Phosphoserine is present on Ser1098. The interval 1117–1192 is disordered; that stretch reads QKMAQTGRGD…SQLLSNHQQQ (76 aa). Lys1118 participates in a covalent cross-link: Glycyl lysine isopeptide (Lys-Gly) (interchain with G-Cter in SUMO2). The segment covering 1125–1145 has biased composition (basic and acidic residues); the sequence is GDCERKSELPLKELGKEETKQ. Residues 1146-1157 are compositionally biased toward polar residues; it reads KNMPSATISKAP. Glycyl lysine isopeptide (Lys-Gly) (interchain with G-Cter in SUMO2) cross-links involve residues Lys1176 and Lys1182. Over residues 1183–1192 the composition is skewed to low complexity; that stretch reads SQLLSNHQQQ. Residues Lys1199, Lys1216, Lys1234, and Lys1250 each participate in a glycyl lysine isopeptide (Lys-Gly) (interchain with G-Cter in SUMO2) cross-link. Positions 1220-1335 are disordered; it reads DSMKQTGVDP…RGTRVAVSSP (116 aa). The segment covering 1231 to 1241 has biased composition (basic and acidic residues); it reads SRFKQDPDSRT. 2 stretches are compositionally biased toward basic and acidic residues: residues 1253 to 1276 and 1291 to 1327; these read DQQK…KTPN and IKEE…DSRG. Glycyl lysine isopeptide (Lys-Gly) (interchain with G-Cter in SUMO2) cross-links involve residues Lys1292, Lys1310, and Lys1414. Residues 1423–1459 form a disordered region; it reads ANQYRSKSPAPVEKATAEREREAERERDRHSPFGQRH. The span at 1437 to 1453 shows a compositional bias: basic and acidic residues; the sequence is ATAEREREAERERDRHS.

Functionally, transcription factor, which represses ZNF609 transcription. The polypeptide is Zinc finger protein 608 (ZNF608) (Homo sapiens (Human)).